Reading from the N-terminus, the 579-residue chain is Protein inscuteable homolog (579 aa).

Residues 74-89 (SVQRWMEDLKLMTECE) are important for interaction with GPSM2. The short motif at 576–579 (ESFV) is the PDZ-binding element.

Interacts with ALS2CR19/PAR3B and F2RL2/PAR3. Interacts with GPSM1/AGS3 and GPSM2/LGN (via TPR repeat region). Identified in a complex with GPSM2 and F2RL2. As to expression, isoform 1 is expressed in various tissues with stronger expression in liver, kidney and small intestine. Isoform 2 is abundantly expressed in small intestine and to a lower extent in lung and pancreas.

It is found in the cytoplasm. Its subcellular location is the cell cortex. Its function is as follows. May function as an adapter linking the Par3 complex to the GPSM1/GPSM2 complex. Involved in spindle orientation during mitosis. May regulate cell proliferation and differentiation in the developing nervous system. May play a role in the asymmetric division of fibroblasts and participate in the process of stratification of the squamous epithelium. The polypeptide is Protein inscuteable homolog (INSC) (Homo sapiens (Human)).